The primary structure comprises 595 residues: Adenine deaminase (595 aa).

It belongs to the metallo-dependent hydrolases superfamily. Adenine deaminase family. In terms of assembly, homodimer. Mn(2+) is required as a cofactor.

The enzyme catalyses adenine + H2O + H(+) = hypoxanthine + NH4(+). The protein is Adenine deaminase of Serratia proteamaculans (strain 568).